A 134-amino-acid chain; its full sequence is Syncollin (134 aa).

The first 21 residues, 1–21 (MSPLRPLLLALALASVPCAQG), serve as a signal peptide directing secretion.

As to quaternary structure, monomer and homooligomer; most probably hexameric. Interacts with GP2. In terms of processing, contains intrachain disulfide bonds.

The protein localises to the zymogen granule membrane. The protein resides in the zymogen granule lumen. Functions in exocytosis in pancreatic acinar cells regulating the fusion of zymogen granules with each other. May have a pore-forming activity on membranes and regulate exocytosis in other exocrine tissues. This Homo sapiens (Human) protein is Syncollin (SYCN).